Here is a 214-residue protein sequence, read N- to C-terminus: MKVVAFERSVQGTSASRRLRNSGKTPGIVYGSKDPALVIELDHNALFHALRKEAFHSSILDLEIGGKTQKVLLRDYQMHPFKPLVLHIDFQRVSATKKVHMRVPLHFTNADTSAAVKLQGAVISHIATELEVSYLPADLPEFIEVDLAKIEVGHGIHAKDIALPKGVTLILHVEQENPVLANARIPAVKAAEPTDTPAAPAATAPAADATKVII.

It belongs to the bacterial ribosomal protein bL25 family. CTC subfamily. In terms of assembly, part of the 50S ribosomal subunit; part of the 5S rRNA/L5/L18/L25 subcomplex. Contacts the 5S rRNA. Binds to the 5S rRNA independently of L5 and L18.

Functionally, this is one of the proteins that binds to the 5S RNA in the ribosome where it forms part of the central protuberance. This Polynucleobacter necessarius subsp. necessarius (strain STIR1) protein is Large ribosomal subunit protein bL25.